A 549-amino-acid chain; its full sequence is Chaperonin GroEL (549 aa).

ATP contacts are provided by residues 29 to 32, Lys-50, 86 to 90, Gly-418, and Asp-499; these read TAGP and DGTTT.

It belongs to the chaperonin (HSP60) family. In terms of assembly, forms a cylinder of 14 subunits composed of two heptameric rings stacked back-to-back. Interacts with the co-chaperonin GroES.

It is found in the cytoplasm. It catalyses the reaction ATP + H2O + a folded polypeptide = ADP + phosphate + an unfolded polypeptide.. Functionally, together with its co-chaperonin GroES, plays an essential role in assisting protein folding. The GroEL-GroES system forms a nano-cage that allows encapsulation of the non-native substrate proteins and provides a physical environment optimized to promote and accelerate protein folding. The polypeptide is Chaperonin GroEL (Wolbachia sp. subsp. Drosophila simulans (strain wRi)).